We begin with the raw amino-acid sequence, 1562 residues long: Phospholipid-transporting ATPase dnf1 (1562 aa).

Disordered regions lie at residues 1 to 38 (MKSSGIAGDSNGFETNFLNETTNREEDGAFNWNAADDG), 55 to 94 (LPLGIDENELDEIDINGDSKKLDSVEVDESHDVNSPSDSR), 115 to 134 (TPSTKTEQTSKGKGKKKKAH), and 146 to 166 (PLDDIEPTSPREASPVFNGRP). The Extracellular portion of the chain corresponds to 1 to 275 (MKSSGIAGDS…IAIMQMIPGW (275 aa)). Polar residues predominate over residues 12-21 (GFETNFLNET). The span at 60–69 (DENELDEIDI) shows a compositional bias: acidic residues. The segment covering 71 to 86 (GDSKKLDSVEVDESHD) has biased composition (basic and acidic residues). A helical membrane pass occupies residues 276–296 (STTGTYTTIIPLLIFISIAIL). Residues 297 to 574 (REGFDNYRRY…APSMQKVTNR (278 aa)) are Cytoplasmic-facing. The interval 347–406 (SQESASRSTIRSTDEREPERTSEDPPQLPPSPSSPSSPALSVKPNIDPQPPLYNSTLTTT) is disordered. The span at 358–369 (STDEREPERTSE) shows a compositional bias: basic and acidic residues. Residues 372–381 (PQLPPSPSSP) are compositionally biased toward pro residues. A helical membrane pass occupies residues 575–595 (IVIFIFALVVSMAIYCTAAYF). At 596-614 (VWQKKVERKLWYLTNSKLS) the chain is on the extracellular side. A helical transmembrane segment spans residues 615–635 (FVPILVSFIILYNTMVPISLY). Residues 636 to 1309 (VSMEIIRVFQ…YILGTFYKEQ (674 aa)) are Cytoplasmic-facing. The active-site 4-aspartylphosphate intermediate is Asp684. The ATP site is built by Asp684, Lys685, Thr686, Glu794, Phe843, Ser845, Lys848, and Lys866. Asp684 contacts Mg(2+). A Mg(2+)-binding site is contributed by Thr686. Ser954 carries the phosphoserine modification. ATP contacts are provided by residues Arg1022, Thr1023, Thr1102, Gly1103, Asp1104, 1181–1188 (VIVIDGST), Arg1216, and Lys1222. Asp1243 provides a ligand contact to Mg(2+). ATP-binding residues include Asn1246 and Asp1247. The helical transmembrane segment at 1310–1330 (FFFLMQAIMQPFVGYTGQSLY) threads the bilayer. Residues 1331–1332 (ES) lie on the Extracellular side of the membrane. The chain crosses the membrane as a helical span at residues 1333–1353 (WGLTCFNTLFSSLCVIGLGIF). Over 1354-1381 (EKDLSASTVIAVPELYQKGINNEAFNWR) the chain is Cytoplasmic. The helical transmembrane segment at 1382 to 1402 (VYFGWCSIAFIQAFLVFYVTY) threads the bilayer. At 1403 to 1414 (SLFGMKELNDNN) the chain is on the extracellular side. Residues 1415-1435 (IFAYGQLIFTAAIFIMNFKLV) form a helical membrane-spanning segment. Over 1436–1443 (FIEMQYIN) the chain is Cytoplasmic. A helical membrane pass occupies residues 1444–1464 (IISIIVLVLTSLAWFLFNIFI). The Extracellular segment spans residues 1465 to 1490 (SEHYPDKNLYLARSQFLHHFGKNPSW). The chain crosses the membrane as a helical span at residues 1491-1511 (WLTMLFVMVCALTIDIVAQML). At 1512–1562 (RRTLRPTDTDIFVEMENDAFVRSRFEQESGEFLQANAPSVDEIEQYLKSRD) the chain is on the cytoplasmic side.

This sequence belongs to the cation transport ATPase (P-type) (TC 3.A.3) family. Type IV subfamily. It depends on Mg(2+) as a cofactor.

The protein localises to the golgi apparatus. It localises to the trans-Golgi network membrane. It is found in the endosome membrane. The catalysed reaction is ATP + H2O + phospholipidSide 1 = ADP + phosphate + phospholipidSide 2.. The enzyme catalyses a 1,2-diacyl-sn-glycero-3-phosphocholine(out) + ATP + H2O = a 1,2-diacyl-sn-glycero-3-phosphocholine(in) + ADP + phosphate + H(+). It catalyses the reaction a 1,2-diacyl-sn-glycero-3-phosphoethanolamine(out) + ATP + H2O = a 1,2-diacyl-sn-glycero-3-phosphoethanolamine(in) + ADP + phosphate + H(+). Functionally, catalytic component of a P4-ATPase flippase complex which catalyzes the hydrolysis of ATP coupled to the transport of phosphatidylcholine and small amounts of phosphatidylethanolamine from the lumen to the cytosolic leaflet of the trans-Golgi network and ensures the maintenance of asymmetric distribution of phospholipids. May be involved in transport from early endosomes to the trans-Golgi network (TGN). This chain is Phospholipid-transporting ATPase dnf1, found in Schizosaccharomyces pombe (strain 972 / ATCC 24843) (Fission yeast).